The sequence spans 1043 residues: F-box DNA helicase 1 (1043 aa).

Residues 30-56 form a disordered region; the sequence is QRWTNRDPNHGLYPKPRTKRGSRGQGS. Residues 57–64 carry the PIP-box motif; sequence QRCIPEFF. Residues 101–191 form a disordered region; it reads CALPQEGSAG…QDAGDVGPDP (91 aa). S124 is modified (phosphoserine). In terms of domain architecture, F-box spans 138 to 184; sequence SRWDGVSKKAPRHHLSVPCTRPREARQEAEDSTSRLSAESGETDQDA. The segment covering 158 to 170 has biased composition (basic and acidic residues); the sequence is RPREARQEAEDST. Positions 442–705 constitute a UvrD-like helicase ATP-binding domain; sequence THEQQLILNH…FYLTQSFRFG (264 aa). Residue 463-470 coordinates ATP; it reads AFAGTGKT. Positions 807–811 match the APIM motif motif; that stretch reads KFIRR.

The protein belongs to the helicase family. UvrD subfamily. In terms of assembly, part of the SCF (SKP1-CUL1-F-box) E3 ubiquitin-protein ligase complex SCF(FBH1) composed of CUL1, SKP1, RBX1 and FBH1. Interacts with RAD51. Interacts with RPA2. Interacts (via PIP-box and RanBP2-type zinc finger) with PCNA. In terms of processing, ubiquitinated. Ubiquitination by the DCX(DTL) complex, also named CRL4(CDT2), leading to its degradation: ubiquitination takes place after its localization to DNA damage sites, possibly to facilitate the translesion synthesis (TLS) pathway.

It is found in the nucleus. It localises to the chromosome. The catalysed reaction is Couples ATP hydrolysis with the unwinding of duplex DNA by translocating in the 3'-5' direction.. The enzyme catalyses ATP + H2O = ADP + phosphate + H(+). It functions in the pathway protein modification; protein ubiquitination. Its function is as follows. 3'-5' DNA helicase and substrate-recognition component of the SCF(FBH1) E3 ubiquitin ligase complex that plays a key role in response to stalled/damaged replication forks. Involved in genome maintenance by acting as an anti-recombinogenic helicase and preventing extensive strand exchange during homologous recombination: promotes RAD51 filament dissolution from stalled forks, thereby inhibiting homologous recombination and preventing excessive recombination. Also promotes cell death and DNA double-strand breakage in response to replication stress: together with MUS81, promotes the endonucleolytic DNA cleavage following prolonged replication stress via its helicase activity, possibly to eliminate cells with excessive replication stress. Plays a major role in remodeling of stalled DNA forks by catalyzing fork regression, in which the fork reverses and the two nascent DNA strands anneal. In addition to the helicase activity, also acts as the substrate-recognition component of the SCF(FBH1) E3 ubiquitin ligase complex, a complex that mediates ubiquitination of RAD51, leading to regulate RAD51 subcellular location. The polypeptide is F-box DNA helicase 1 (Homo sapiens (Human)).